The chain runs to 172 residues: Shikimate kinase (172 aa).

An ATP-binding site is contributed by 11 to 16; it reads GTGKTA. Mg(2+) is bound at residue T15. Positions 33, 57, and 79 each coordinate substrate. Position 117 (R117) interacts with ATP. Residue R136 participates in substrate binding.

It belongs to the shikimate kinase family. As to quaternary structure, monomer. It depends on Mg(2+) as a cofactor.

The protein resides in the cytoplasm. It catalyses the reaction shikimate + ATP = 3-phosphoshikimate + ADP + H(+). It functions in the pathway metabolic intermediate biosynthesis; chorismate biosynthesis; chorismate from D-erythrose 4-phosphate and phosphoenolpyruvate: step 5/7. In terms of biological role, catalyzes the specific phosphorylation of the 3-hydroxyl group of shikimic acid using ATP as a cosubstrate. The sequence is that of Shikimate kinase from Pelotomaculum thermopropionicum (strain DSM 13744 / JCM 10971 / SI).